Reading from the N-terminus, the 265-residue chain is tRNA pseudouridine synthase A (265 aa).

Residue aspartate 58 is the Nucleophile of the active site. Tyrosine 116 provides a ligand contact to substrate.

Belongs to the tRNA pseudouridine synthase TruA family. Homodimer.

It carries out the reaction uridine(38/39/40) in tRNA = pseudouridine(38/39/40) in tRNA. Formation of pseudouridine at positions 38, 39 and 40 in the anticodon stem and loop of transfer RNAs. In Neisseria gonorrhoeae (strain NCCP11945), this protein is tRNA pseudouridine synthase A.